The sequence spans 80 residues: Diphthamide biosynthesis protein 3 (80 aa).

In terms of domain architecture, DPH-type MB spans 4 to 60 (FHDEVEIEDFEFDEEKDVYHYPCPCGDRFEIPREMLEMGEDVAQCPSCSLLIRVIYD). Positions 26, 28, 48, and 51 each coordinate Fe cation.

The protein belongs to the DPH3 family. Component of the 2-(3-amino-3-carboxypropyl)histidine synthase complex composed of dph-1, dph-2, dph-3 and a NADH-dependent reductase. Requires Fe(2+) as cofactor.

The enzyme catalyses [3Fe-4S](1+)-[protein] + Fe(2+)-[Dph3] = [3Fe-4S](0)-[protein] + Fe(3+)-[Dph3]. The catalysed reaction is 2 [3Fe-4S](0)-[protein] + 2 Fe(2+)-[Dph3] + NADH = 2 [4Fe-4S](1+)-[protein] + 2 [Dph3] + NAD(+) + H(+). Its pathway is protein modification; peptidyl-diphthamide biosynthesis. Required for the first step of diphthamide biosynthesis, a post-translational modification of histidine which occurs in elongation factor 2. Dph-1 and dph-2 transfer a 3-amino-3-carboxypropyl (ACP) group from S-adenosyl-L-methionine (SAM) to a histidine residue, the reaction is assisted by a reduction system comprising dph-3 and a NADH-dependent reductase. Acts as an electron donor to reduce the Fe-S cluster in dph1-dph2 keeping the [4Fe-4S] clusters in the active and reduced state. Restores iron to dph-1-dph-2 iron-sulfur clusters which have degraded from [4Fe-4S] to [3Fe-4S] by donating an iron atom to reform [4Fe-4S] clusters, in a manner dependent on the presence of elongation factor 2 and SAM. Associates with the elongator complex and is required for tRNA Wobble base modifications mediated by the elongator complex. The elongator complex is required for multiple tRNA modifications, including mcm5U (5-methoxycarbonylmethyl uridine), mcm5s 2U (5-methoxycarbonylmethyl-2-thiouridine), and ncm5U (5-carbamoylmethyl uridine). The protein is Diphthamide biosynthesis protein 3 of Caenorhabditis elegans.